An 841-amino-acid chain; its full sequence is Taste receptor type 1 member 1 (841 aa).

The signal sequence occupies residues 1–20; that stretch reads MLLCTARLVGLQLLISCCWA. At 21–567 the chain is on the extracellular side; that stretch reads FACHSTESSP…VFLALREHTS (547 aa). N-linked (GlcNAc...) asparagine glycans are attached at residues N87, N88, N95, N291, N479, and N529. The helical transmembrane segment at 568–588 threads the bilayer; sequence WVLLAANTLLLLLLLGTAGLF. Residues 589 to 603 lie on the Cytoplasmic side of the membrane; that stretch reads AWHLDTPVVRSAGGR. A helical membrane pass occupies residues 604 to 624; that stretch reads LCFLMLGSLAAGSGSLYGFFG. The Extracellular portion of the chain corresponds to 625–639; that stretch reads EPTRPACLLRQALFA. A helical transmembrane segment spans residues 640–660; that stretch reads LGFTIFLSCLTVRSFQLIIIF. Residues 661-680 lie on the Cytoplasmic side of the membrane; that stretch reads KFSTKVPTFYHAWVQNHGAG. The chain crosses the membrane as a helical span at residues 681 to 701; that stretch reads LFVMISSAAQLLICLTWLVVW. The Extracellular portion of the chain corresponds to 702–725; it reads TPLPAREYQRFPHLVMLECTETNS. The helical transmembrane segment at 726-746 threads the bilayer; it reads LGFILAFLYNGLLSISAFACS. The Cytoplasmic portion of the chain corresponds to 747–761; that stretch reads YLGKDLPENYNEAKC. A helical transmembrane segment spans residues 762-782; it reads VTFSLLFNFVSWIAFFTTASV. Residues 783–795 lie on the Extracellular side of the membrane; it reads YDGKYLPAANMMA. Residues 796–816 traverse the membrane as a helical segment; sequence GLSSLSSGFGGYFLPKCYVIL. Over 817–841 the chain is Cytoplasmic; that stretch reads CRPDLNSTEHFQASIQDYTRRCGST.

It belongs to the G-protein coupled receptor 3 family. TAS1R subfamily. As to quaternary structure, forms heterodimers with TAS1R3.

It localises to the cell membrane. Functionally, putative taste receptor. TAS1R1/TAS1R3 responds to the umami taste stimulus (the taste of monosodium glutamate). Sequence differences within and between species can significantly influence the selectivity and specificity of taste responses. This Homo sapiens (Human) protein is Taste receptor type 1 member 1 (TAS1R1).